Here is a 487-residue protein sequence, read N- to C-terminus: NADH-quinone oxidoreductase subunit N (487 aa).

Transmembrane regions (helical) follow at residues 12-32 (VLIL…LIGV), 40-60 (LTVT…IVLF), 79-99 (YMKI…VGFS), 104-124 (FDIF…MLMI), 129-149 (MLSL…LAAI), 164-184 (FVLG…LYGF), 201-221 (ILHL…AFKI), 248-268 (APKI…FIPL), 281-301 (ILIF…IGQT), 310-330 (SSIG…ILGV), 332-352 (GILI…AFIL), 378-398 (AIVM…AGFF), 411-431 (GLVP…FYYL), and 455-475 (LCLC…FWFS).

The protein belongs to the complex I subunit 2 family. As to quaternary structure, NDH-1 is composed of 14 different subunits. Subunits NuoA, H, J, K, L, M, N constitute the membrane sector of the complex.

It localises to the cell inner membrane. The catalysed reaction is a quinone + NADH + 5 H(+)(in) = a quinol + NAD(+) + 4 H(+)(out). In terms of biological role, NDH-1 shuttles electrons from NADH, via FMN and iron-sulfur (Fe-S) centers, to quinones in the respiratory chain. The immediate electron acceptor for the enzyme in this species is believed to be ubiquinone. Couples the redox reaction to proton translocation (for every two electrons transferred, four hydrogen ions are translocated across the cytoplasmic membrane), and thus conserves the redox energy in a proton gradient. The chain is NADH-quinone oxidoreductase subunit N from Bartonella bacilliformis (strain ATCC 35685 / KC583 / Herrer 020/F12,63).